A 64-amino-acid polypeptide reads, in one-letter code: Alpha-like toxin BmK M2 (64 aa).

Residues arginine 2–histidine 64 form the LCN-type CS-alpha/beta domain. 4 disulfide bridges follow: cysteine 12–cysteine 63, cysteine 16–cysteine 36, cysteine 22–cysteine 46, and cysteine 26–cysteine 48.

The protein belongs to the long (4 C-C) scorpion toxin superfamily. Sodium channel inhibitor family. Alpha subfamily. In terms of tissue distribution, expressed by the venom gland.

The protein resides in the secreted. Functionally, alpha toxins bind voltage-independently at site-3 of sodium channels (Nav) and inhibit the inactivation of the activated channels, thereby blocking neuronal transmission. This toxin is active against both mammals and insects, and is classified as an alpha-like toxin. This chain is Alpha-like toxin BmK M2, found in Olivierus martensii (Manchurian scorpion).